A 1048-amino-acid chain; its full sequence is B3 domain-containing protein Os02g0598200 (1048 aa).

The interval 1 to 345 is disordered; it reads MDGAVRGQGC…QKERVASSDN (345 aa). Positions 16–25 are enriched in basic residues; that stretch reads SFNKTKKKNR. 6 stretches are compositionally biased toward basic and acidic residues: residues 26-134, 151-162, 169-214, 243-253, 281-295, and 332-345; these read NCSD…SDDM, KKNSRNDADEEK, CSDD…GDKK, KNMKSDGDSYK, AKER…MEMK, and LKRE…SSDN. The TF-B3 1 DNA-binding region spans 375–468; that stretch reads AFAFFKFVRD…TFSVRVFGID (94 aa). The interval 505–528 is disordered; it reads QYQDSEDIHDGPNVSGESPRSKEP. A DNA-binding region (TF-B3 2) is located at residues 953–1048; it reads LQFCIPSTIQ…LAFQVYITRK (96 aa).

It localises to the nucleus. The protein is B3 domain-containing protein Os02g0598200 of Oryza sativa subsp. japonica (Rice).